Reading from the N-terminus, the 788-residue chain is Protein FAR1-RELATED SEQUENCE 12 (788 aa).

An FAR1 1 domain is found at 57–133 (EFYNAYAART…QKEHNHELGG (77 aa)). Residues 127 to 200 (HNHELGGEGS…GEVSDDHHQT (74 aa)) form a disordered region. Residues 142–151 (PRPSRAPAPT) show a composition bias toward low complexity. Residues 165–175 (KVVDESDRETR) show a composition bias toward basic and acidic residues. The FAR1 2 domain maps to 225–301 (QFYQAYAEVV…NKDHNHDLEP (77 aa)). The region spanning 399 to 495 (SVVFDTSYRK…SAWQIREKER (97 aa)) is the MULE domain. Residues 674 to 710 (HAVTFSASNLNSSCSCQMFEHEGLLCRHILKVFNLLD) form an SWIM-type zinc finger.

It belongs to the FHY3/FAR1 family. Expressed in hypocotyls, rosette and cauline leaves, inflorescences stems, flowers and siliques.

Its subcellular location is the nucleus. Putative transcription activator involved in regulating light control of development. In Arabidopsis thaliana (Mouse-ear cress), this protein is Protein FAR1-RELATED SEQUENCE 12 (FRS12).